Consider the following 95-residue polypeptide: CRISPR-associated endoribonuclease Cas2 1 (95 aa).

Residue aspartate 11 participates in Mg(2+) binding.

Belongs to the CRISPR-associated endoribonuclease Cas2 protein family. In terms of assembly, homodimer, forms a heterotetramer with a Cas1 homodimer. The cofactor is Mg(2+).

In terms of biological role, CRISPR (clustered regularly interspaced short palindromic repeat), is an adaptive immune system that provides protection against mobile genetic elements (viruses, transposable elements and conjugative plasmids). CRISPR clusters contain sequences complementary to antecedent mobile elements and target invading nucleic acids. CRISPR clusters are transcribed and processed into CRISPR RNA (crRNA). Functions as a ssRNA-specific endoribonuclease. Involved in the integration of spacer DNA into the CRISPR cassette. This Methanospirillum hungatei JF-1 (strain ATCC 27890 / DSM 864 / NBRC 100397 / JF-1) protein is CRISPR-associated endoribonuclease Cas2 1.